The sequence spans 414 residues: GPI mannosyltransferase 1 (414 aa).

Helical transmembrane passes span 6 to 26, 87 to 107, 119 to 139, 149 to 171, 183 to 203, 213 to 233, 282 to 302, 316 to 336, 356 to 376, and 387 to 407; these read ISHI…FGLY, YIFM…LSGI, IIML…STRG, IMLS…WLGL, LPSI…VPIV, FLIT…SIYG, MEKF…PLLF, FAFV…FLIF, IVAL…AYQL, and GLLF…SVFI.

Belongs to the PIGM family.

The protein resides in the endoplasmic reticulum membrane. It functions in the pathway glycolipid biosynthesis; glycosylphosphatidylinositol-anchor biosynthesis. In terms of biological role, mannosyltransferase involved in glycosylphosphatidylinositol-anchor biosynthesis. Transfers the first alpha-1,4-mannose to GlcN-acyl-PI during GPI precursor assembly. Required for cell wall integrity. The protein is GPI mannosyltransferase 1 (GPI14) of Debaryomyces hansenii (strain ATCC 36239 / CBS 767 / BCRC 21394 / JCM 1990 / NBRC 0083 / IGC 2968) (Yeast).